The sequence spans 275 residues: MQAVQQEIAQALKVQPPFADAAALEAEVARRVAFIKDCLANARLKTLVLGISGGVDSLTAALLAQRAINELRAETGDKAYTFIAVRLPYQVQHDEHDAQACLEVIKADEVHTVDIAPAVRALAAEVAALKNGSPTLVDFVVGNVKARTRMVAQYTIAGARAGLVIGTDHAAEAVMGFFTKFGDGACDLAPLSGLVKNQVRAIARSFGAPESLVEKVPTADLEDLEPGKPDEASHGVTYAQIDAFLHGQPVDQAAFDIIVATYRKTQHKRELPFAP.

50 to 57 (GISGGVDS) provides a ligand contact to ATP. Residue aspartate 56 participates in Mg(2+) binding. Arginine 147 provides a ligand contact to deamido-NAD(+). Position 167 (threonine 167) interacts with ATP. Mg(2+) is bound at residue glutamate 172. Residues lysine 180 and aspartate 187 each coordinate deamido-NAD(+). The ATP site is built by lysine 196 and threonine 218. Residue 267–268 (HK) coordinates deamido-NAD(+).

Belongs to the NAD synthetase family. As to quaternary structure, homodimer.

The enzyme catalyses deamido-NAD(+) + NH4(+) + ATP = AMP + diphosphate + NAD(+) + H(+). The protein operates within cofactor biosynthesis; NAD(+) biosynthesis; NAD(+) from deamido-NAD(+) (ammonia route): step 1/1. Its function is as follows. Catalyzes the ATP-dependent amidation of deamido-NAD to form NAD. Uses ammonia as a nitrogen source. In Pseudomonas putida (strain ATCC 47054 / DSM 6125 / CFBP 8728 / NCIMB 11950 / KT2440), this protein is NH(3)-dependent NAD(+) synthetase.